The following is a 444-amino-acid chain: Putative dipeptidase CPC735_015490 (444 aa).

An N-terminal signal peptide occupies residues 1-34; that stretch reads MSQRTEHNGSWLRNAGSLLSVLACVAVLASPASA. The Zn(2+) site is built by His67, Asp69, and Glu178. Cysteines 118 and 207 form a disulfide. His205 is a substrate binding site. Zn(2+) is bound by residues His250 and His271. Substrate-binding residues include Arg282 and Asp342. Residue Asn413 is glycosylated (N-linked (GlcNAc...) asparagine).

Belongs to the metallo-dependent hydrolases superfamily. Peptidase M19 family. Zn(2+) is required as a cofactor.

The catalysed reaction is an L-aminoacyl-L-amino acid + H2O = 2 an L-alpha-amino acid. Hydrolyzes a wide range of dipeptides. The chain is Putative dipeptidase CPC735_015490 from Coccidioides posadasii (strain C735) (Valley fever fungus).